Consider the following 114-residue polypeptide: UPF0145 protein TT_C1581 (114 aa).

This sequence belongs to the UPF0145 family.

The polypeptide is UPF0145 protein TT_C1581 (Thermus thermophilus (strain ATCC BAA-163 / DSM 7039 / HB27)).